A 760-amino-acid chain; its full sequence is Rho GTPase-activating protein 26 (760 aa).

The 256-residue stretch at 7-262 (EFSECCLDSP…MKENPHEHKN (256 aa)) folds into the BAR domain. A PH domain is found at 265–369 (PYTMEGYLYV…WMEAMDGREP (105 aa)). The Rho-GAP domain maps to 383–568 (AQLDSIGFSI…ILIENHEKIF (186 aa)). Disordered regions lie at residues 571–617 (VPET…ESRN) and 658–701 (PNRP…SPIS). Residues 605 to 617 (HTAQPNEKQESRN) show a composition bias toward polar residues. The span at 674–701 (LSPSWPMFSAPSSPMPTSSTSSDSSPIS) shows a compositional bias: low complexity. The 59-residue stretch at 702-760 (SPLRKARALYACKAEHDSELSFTAGTVFDNVHPSQEPGWLEGTLNGKTGLIPENYVEFL) folds into the SH3 domain.

As to quaternary structure, binds to the C-terminus of PTK2/FAK1. As to expression, detected in embryonic brain and liver, and at low levels in embryonic eye, heart, lung, intestine and skeletal muscle.

It localises to the cell junction. The protein resides in the focal adhesion. It is found in the cytoplasm. The protein localises to the cytoskeleton. Its subcellular location is the endosome membrane. Functionally, GTPase-activating protein for RHOA and CDC42. May be involved in the regulation of neosynthesized protein export through a Rab-endososomal dependent export route. The sequence is that of Rho GTPase-activating protein 26 (ARHGAP26) from Gallus gallus (Chicken).